A 25-amino-acid polypeptide reads, in one-letter code: Ocellatin-K1 (25 aa).

The residue at position 25 (Ile25) is an Isoleucine amide.

As to expression, expressed by the skin glands.

It is found in the secreted. Functionally, has hemolytic and antibacterial activity. This chain is Ocellatin-K1, found in Leptodactylus knudseni (Knudsen's thin-toed frog).